Consider the following 108-residue polypeptide: Parvalbumin beta (108 aa).

An N-acetylalanine modification is found at Ala1. A disulfide bridge connects residues Cys11 and Cys33. EF-hand domains lie at Lys38–Gly73 and Leu77–Ala108. Asp51, Asp53, Ser55, Phe57, Glu59, Glu62, Asp90, Asp92, Asp94, Ala96, and Glu101 together coordinate Ca(2+).

It belongs to the parvalbumin family.

Its function is as follows. In muscle, parvalbumin is thought to be involved in relaxation after contraction. It binds two calcium ions. The chain is Parvalbumin beta from Merlangius merlangus (Whiting).